The sequence spans 472 residues: Probable glycine dehydrogenase (decarboxylating) subunit 2 (472 aa).

Residue lysine 268 is modified to N6-(pyridoxal phosphate)lysine.

Belongs to the GcvP family. C-terminal subunit subfamily. The glycine cleavage system is composed of four proteins: P, T, L and H. In this organism, the P 'protein' is a heterodimer of two subunits. Pyridoxal 5'-phosphate is required as a cofactor.

It carries out the reaction N(6)-[(R)-lipoyl]-L-lysyl-[glycine-cleavage complex H protein] + glycine + H(+) = N(6)-[(R)-S(8)-aminomethyldihydrolipoyl]-L-lysyl-[glycine-cleavage complex H protein] + CO2. Its function is as follows. The glycine cleavage system catalyzes the degradation of glycine. The P protein binds the alpha-amino group of glycine through its pyridoxal phosphate cofactor; CO(2) is released and the remaining methylamine moiety is then transferred to the lipoamide cofactor of the H protein. The sequence is that of Probable glycine dehydrogenase (decarboxylating) subunit 2 from Thermoplasma volcanium (strain ATCC 51530 / DSM 4299 / JCM 9571 / NBRC 15438 / GSS1).